We begin with the raw amino-acid sequence, 316 residues long: Adenine deaminase (316 aa).

Residues His14, His16, and His194 each coordinate Zn(2+). Catalysis depends on Glu197, which acts as the Proton donor. Asp275 serves as a coordination point for Zn(2+). Residue Asp276 coordinates substrate.

The protein belongs to the metallo-dependent hydrolases superfamily. Adenosine and AMP deaminases family. Adenine deaminase type 2 subfamily. It depends on Zn(2+) as a cofactor.

The enzyme catalyses adenine + H2O + H(+) = hypoxanthine + NH4(+). Its function is as follows. Catalyzes the hydrolytic deamination of adenine to hypoxanthine. Plays an important role in the purine salvage pathway and in nitrogen catabolism. This Stutzerimonas stutzeri (strain A1501) (Pseudomonas stutzeri) protein is Adenine deaminase.